The sequence spans 141 residues: ATP synthase epsilon chain (141 aa).

Belongs to the ATPase epsilon chain family. In terms of assembly, F-type ATPases have 2 components, CF(1) - the catalytic core - and CF(0) - the membrane proton channel. CF(1) has five subunits: alpha(3), beta(3), gamma(1), delta(1), epsilon(1). CF(0) has three main subunits: a, b and c.

Its subcellular location is the cell membrane. Functionally, produces ATP from ADP in the presence of a proton gradient across the membrane. The sequence is that of ATP synthase epsilon chain from Lactococcus lactis subsp. cremoris (strain MG1363).